The sequence spans 384 residues: Flap endonuclease 1 (384 aa).

The segment at 1–105 is N-domain; it reads MGIKKLTDLI…GELAKRQARR (105 aa). Aspartate 34 lines the Mg(2+) pocket. Residue arginine 71 coordinates DNA. Positions 87, 159, 161, 180, and 182 each coordinate Mg(2+). The interval 123-254 is I-domain; that stretch reads EVQKFAKRVI…KRAIELIQKH (132 aa). Glutamate 159 is a binding site for DNA. DNA contacts are provided by glycine 232 and aspartate 234. Residue aspartate 234 participates in Mg(2+) binding. The segment at 338-346 is interaction with PCNA; that stretch reads VQSRMDSFI. The segment at 349-384 is disordered; sequence IKKPEDPNDKKKKVTKTPSKPSAKTSKKSSSTFKRK. Residues 364-384 show a composition bias toward low complexity; it reads KTPSKPSAKTSKKSSSTFKRK.

The protein belongs to the XPG/RAD2 endonuclease family. FEN1 subfamily. Interacts with PCNA. Three molecules of repg bind to one PCNA trimer with each molecule binding to one PCNA monomer. PCNA stimulates the nuclease activity without altering cleavage specificity. Mg(2+) is required as a cofactor. In terms of processing, phosphorylated. Phosphorylation upon DNA damage induces relocalization to the nuclear plasma.

The protein localises to the nucleus. It is found in the nucleolus. Its subcellular location is the nucleoplasm. It localises to the mitochondrion. Its function is as follows. Structure-specific nuclease with 5'-flap endonuclease and 5'-3' exonuclease activities involved in DNA replication and repair. During DNA replication, cleaves the 5'-overhanging flap structure that is generated by displacement synthesis when DNA polymerase encounters the 5'-end of a downstream Okazaki fragment. It enters the flap from the 5'-end and then tracks to cleave the flap base, leaving a nick for ligation. Also involved in the long patch base excision repair (LP-BER) pathway, by cleaving within the apurinic/apyrimidinic (AP) site-terminated flap. Acts as a genome stabilization factor that prevents flaps from equilibrating into structures that lead to duplications and deletions. Also possesses 5'-3' exonuclease activity on nicked or gapped double-stranded DNA, and exhibits RNase H activity. Also involved in replication and repair of rDNA and in repairing mitochondrial DNA. This Dictyostelium discoideum (Social amoeba) protein is Flap endonuclease 1.